The primary structure comprises 698 residues: Potassium-transporting ATPase ATP-binding subunit (698 aa).

4 helical membrane-spanning segments follow: residues 56 to 76 (IMFV…VPSL), 82 to 102 (LWFN…ANFA), 240 to 260 (TVLI…PLFT), and 271 to 291 (ILVA…LSAI). The 4-aspartylphosphate intermediate role is filled by Asp324. ATP is bound by residues Asp361, Glu365, 393–400 (FKAETRMS), and Lys412. Mg(2+) contacts are provided by Asp535 and Asp539. Helical transmembrane passes span 605 to 625 (FAII…LNIM), 633 to 653 (AILS…PLAM), and 677 to 697 (GGVL…GLFI).

It belongs to the cation transport ATPase (P-type) (TC 3.A.3) family. Type IA subfamily. The system is composed of three essential subunits: KdpA, KdpB and KdpC.

It localises to the cell membrane. It catalyses the reaction K(+)(out) + ATP + H2O = K(+)(in) + ADP + phosphate + H(+). In terms of biological role, part of the high-affinity ATP-driven potassium transport (or Kdp) system, which catalyzes the hydrolysis of ATP coupled with the electrogenic transport of potassium into the cytoplasm. This subunit is responsible for energy coupling to the transport system and for the release of the potassium ions to the cytoplasm. This chain is Potassium-transporting ATPase ATP-binding subunit, found in Bacillus cytotoxicus (strain DSM 22905 / CIP 110041 / 391-98 / NVH 391-98).